Consider the following 376-residue polypeptide: 26S proteasome non-ATPase regulatory subunit 13 (376 aa).

In terms of domain architecture, PCI spans 171–338; sequence SYYKDALRFL…KRVHMTWVQP (168 aa). Lysine 298 carries the post-translational modification N6-acetyllysine.

Belongs to the proteasome subunit S11 family. Component of the 19S proteasome regulatory particle complex. The 26S proteasome consists of a 20S core particle (CP) and two 19S regulatory subunits (RP). The regulatory particle is made of a lid composed of 9 subunits including PSMD13, a base containing 6 ATPases and few additional components.

Component of the 26S proteasome, a multiprotein complex involved in the ATP-dependent degradation of ubiquitinated proteins. This complex plays a key role in the maintenance of protein homeostasis by removing misfolded or damaged proteins, which could impair cellular functions, and by removing proteins whose functions are no longer required. Therefore, the proteasome participates in numerous cellular processes, including cell cycle progression, apoptosis, or DNA damage repair. This chain is 26S proteasome non-ATPase regulatory subunit 13 (PSMD13), found in Homo sapiens (Human).